The chain runs to 288 residues: Glycine--tRNA ligase alpha subunit (288 aa).

Belongs to the class-II aminoacyl-tRNA synthetase family. As to quaternary structure, tetramer of two alpha and two beta subunits.

The protein localises to the cytoplasm. It catalyses the reaction tRNA(Gly) + glycine + ATP = glycyl-tRNA(Gly) + AMP + diphosphate. The chain is Glycine--tRNA ligase alpha subunit from Rickettsia africae (strain ESF-5).